The chain runs to 94 residues: Large ribosomal subunit protein bL25 (94 aa).

This sequence belongs to the bacterial ribosomal protein bL25 family. Part of the 50S ribosomal subunit; part of the 5S rRNA/L5/L18/L25 subcomplex. Contacts the 5S rRNA. Binds to the 5S rRNA independently of L5 and L18.

Functionally, this is one of the proteins that binds to the 5S RNA in the ribosome where it forms part of the central protuberance. The sequence is that of Large ribosomal subunit protein bL25 from Shigella boydii serotype 4 (strain Sb227).